The chain runs to 199 residues: Protein-methionine-sulfoxide reductase heme-binding subunit MsrQ (199 aa).

The next 5 membrane-spanning stretches (helical) occupy residues 8–28, 82–102, 116–136, 149–169, and 171–191; these read ITWLKVILHLAGLLPFIWLFW, LWCFAWATLHLTSYALLELGI, PYLTLGIVSWVILFALTLTST, FLHNFVYLVAILTPIHYLWSV, and ILSPQPVIYALLALGLLAWRY.

This sequence belongs to the MsrQ family. As to quaternary structure, heterodimer of a catalytic subunit (MsrP) and a heme-binding subunit (MsrQ). FMN is required as a cofactor. Heme b serves as cofactor.

The protein localises to the cell inner membrane. Part of the MsrPQ system that repairs oxidized periplasmic proteins containing methionine sulfoxide residues (Met-O), using respiratory chain electrons. Thus protects these proteins from oxidative-stress damage caused by reactive species of oxygen and chlorine generated by the host defense mechanisms. MsrPQ is essential for the maintenance of envelope integrity under bleach stress, rescuing a wide series of structurally unrelated periplasmic proteins from methionine oxidation. MsrQ provides electrons for reduction to the reductase catalytic subunit MsrP, using the quinone pool of the respiratory chain. This chain is Protein-methionine-sulfoxide reductase heme-binding subunit MsrQ, found in Enterobacter sp. (strain 638).